The chain runs to 523 residues: Flavonoid 3',5'-hydroxylase (523 aa).

Residue Cys-460 participates in heme binding.

It belongs to the cytochrome P450 family. Heme is required as a cofactor.

The catalysed reaction is a 3',5'-unsubstituted flavanone + 2 reduced [NADPH--hemoprotein reductase] + 2 O2 = a 3',5'-dihydroxyflavanone + 2 oxidized [NADPH--hemoprotein reductase] + 2 H2O + 2 H(+). Its pathway is pigment biosynthesis; anthocyanin biosynthesis. Its function is as follows. Catalyzes the 3'5'-hydroxylation of naringenin and eriodictyol to form 5,7,3,'4',5'-pentahydroxyflavanone and 3',5'-hydroxylation of dihydrokaempferol and dihydroquercetin to form dihydromyricetin. The protein is Flavonoid 3',5'-hydroxylase (CYP75A6) of Campanula medium (Canterbury bells).